Consider the following 901-residue polypeptide: Protein translocase subunit SecA (901 aa).

ATP is bound by residues Gln87, 105–109, and Asp512; that span reads GEGKT. Residues 859–901 are disordered; that stretch reads HQDDDSAAAAALAAQTGERKVGRNDPCPCGSGKKYKQCHGRLQ. Residues Cys885, Cys887, Cys896, and His897 each coordinate Zn(2+). A compositionally biased stretch (basic residues) spans 891-901; sequence KKYKQCHGRLQ.

This sequence belongs to the SecA family. Monomer and homodimer. Part of the essential Sec protein translocation apparatus which comprises SecA, SecYEG and auxiliary proteins SecDF-YajC and YidC. It depends on Zn(2+) as a cofactor.

It is found in the cell inner membrane. Its subcellular location is the cytoplasm. It carries out the reaction ATP + H2O + cellular proteinSide 1 = ADP + phosphate + cellular proteinSide 2.. Functionally, part of the Sec protein translocase complex. Interacts with the SecYEG preprotein conducting channel. Has a central role in coupling the hydrolysis of ATP to the transfer of proteins into and across the cell membrane, serving both as a receptor for the preprotein-SecB complex and as an ATP-driven molecular motor driving the stepwise translocation of polypeptide chains across the membrane. This chain is Protein translocase subunit SecA, found in Shigella dysenteriae serotype 1 (strain Sd197).